We begin with the raw amino-acid sequence, 806 residues long: Protein translocase subunit SecA 2 (806 aa).

ATP-binding positions include Gln-122, 140-144 (GEGKT), and Asp-533.

This sequence belongs to the SecA family. As to quaternary structure, monomer and homodimer. Part of the essential Sec protein translocation apparatus which comprises SecA, SecYEG and auxiliary proteins SecDF. Other proteins may also be involved.

The protein localises to the cell membrane. It localises to the cytoplasm. It carries out the reaction ATP + H2O + cellular proteinSide 1 = ADP + phosphate + cellular proteinSide 2.. Functionally, part of the Sec protein translocase complex. Interacts with the SecYEG preprotein conducting channel. Has a central role in coupling the hydrolysis of ATP to the transfer of proteins into and across the cell membrane, serving as an ATP-driven molecular motor driving the stepwise translocation of polypeptide chains across the membrane. In Mycobacterium ulcerans (strain Agy99), this protein is Protein translocase subunit SecA 2.